A 1092-amino-acid polypeptide reads, in one-letter code: Isoleucine--tRNA ligase (1092 aa).

The 'HIGH' region signature appears at 53-63 (PFANGLPHYGH). Residues 613–617 (KLSKR) carry the 'KMSKS' region motif. ATP is bound at residue Lys-616.

This sequence belongs to the class-I aminoacyl-tRNA synthetase family. IleS type 2 subfamily. As to quaternary structure, monomer. The cofactor is Zn(2+).

It is found in the cytoplasm. The catalysed reaction is tRNA(Ile) + L-isoleucine + ATP = L-isoleucyl-tRNA(Ile) + AMP + diphosphate. In terms of biological role, catalyzes the attachment of isoleucine to tRNA(Ile). As IleRS can inadvertently accommodate and process structurally similar amino acids such as valine, to avoid such errors it has two additional distinct tRNA(Ile)-dependent editing activities. One activity is designated as 'pretransfer' editing and involves the hydrolysis of activated Val-AMP. The other activity is designated 'posttransfer' editing and involves deacylation of mischarged Val-tRNA(Ile). The polypeptide is Isoleucine--tRNA ligase (Rickettsia peacockii (strain Rustic)).